A 174-amino-acid chain; its full sequence is Large ribosomal subunit protein uL6 (174 aa).

The protein belongs to the universal ribosomal protein uL6 family. As to quaternary structure, part of the 50S ribosomal subunit.

Its function is as follows. This protein binds to the 23S rRNA, and is important in its secondary structure. It is located near the subunit interface in the base of the L7/L12 stalk, and near the tRNA binding site of the peptidyltransferase center. This chain is Large ribosomal subunit protein uL6, found in Acidithiobacillus ferrooxidans (strain ATCC 23270 / DSM 14882 / CIP 104768 / NCIMB 8455) (Ferrobacillus ferrooxidans (strain ATCC 23270)).